The following is a 256-amino-acid chain: Proteasome subunit beta type-5 (256 aa).

Positions 1-55 are cleaved as a propeptide — removed in mature form; that stretch reads CNMALADIVRLPPASEAPFAPLGAPRDLSGPPSKLAVRPWGGADLPGPGLQLLHG. Threonine 56 serves as the catalytic Nucleophile.

This sequence belongs to the peptidase T1B family. As to quaternary structure, the 26S proteasome consists of a 20S proteasome core and two 19S regulatory subunits. The 20S proteasome core is a barrel-shaped complex made of 28 subunits that are arranged in four stacked rings. The two outer rings are each formed by seven alpha subunits, and the two inner rings are formed by seven beta subunits. The proteolytic activity is exerted by three beta-subunits PSMB5, PSMB6 and PSMB7. Directly interacts with POMP. Interacts with ABCB1 and TAP1.

The protein resides in the cytoplasm. It is found in the nucleus. It catalyses the reaction Cleavage of peptide bonds with very broad specificity.. Functionally, component of the 20S core proteasome complex involved in the proteolytic degradation of most intracellular proteins. This complex plays numerous essential roles within the cell by associating with different regulatory particles. Associated with two 19S regulatory particles, forms the 26S proteasome and thus participates in the ATP-dependent degradation of ubiquitinated proteins. The 26S proteasome plays a key role in the maintenance of protein homeostasis by removing misfolded or damaged proteins that could impair cellular functions, and by removing proteins whose functions are no longer required. Associated with the PA200 or PA28, the 20S proteasome mediates ubiquitin-independent protein degradation. This type of proteolysis is required in several pathways including spermatogenesis (20S-PA200 complex) or generation of a subset of MHC class I-presented antigenic peptides (20S-PA28 complex). Within the 20S core complex, PSMB5 displays a chymotrypsin-like activity. This chain is Proteasome subunit beta type-5 (PSMB5), found in Gallus gallus (Chicken).